A 96-amino-acid polypeptide reads, in one-letter code: Glutamyl-tRNA(Gln) amidotransferase subunit C (96 aa).

It belongs to the GatC family. In terms of assembly, heterotrimer of A, B and C subunits.

It carries out the reaction L-glutamyl-tRNA(Gln) + L-glutamine + ATP + H2O = L-glutaminyl-tRNA(Gln) + L-glutamate + ADP + phosphate + H(+). The catalysed reaction is L-aspartyl-tRNA(Asn) + L-glutamine + ATP + H2O = L-asparaginyl-tRNA(Asn) + L-glutamate + ADP + phosphate + 2 H(+). Allows the formation of correctly charged Asn-tRNA(Asn) or Gln-tRNA(Gln) through the transamidation of misacylated Asp-tRNA(Asn) or Glu-tRNA(Gln) in organisms which lack either or both of asparaginyl-tRNA or glutaminyl-tRNA synthetases. The reaction takes place in the presence of glutamine and ATP through an activated phospho-Asp-tRNA(Asn) or phospho-Glu-tRNA(Gln). The chain is Glutamyl-tRNA(Gln) amidotransferase subunit C from Neisseria meningitidis serogroup A / serotype 4A (strain DSM 15465 / Z2491).